The following is a 267-amino-acid chain: MDSPFNFTRRRSHVVANERRDMIQPSSSIPRPITNNIWTLNDYLNFDKSDVHTGPPRSLEIKKLILDTLKEMPELWTQRCSKKPHWELLGFNILQRTGMRIGTCQLMETFRNARKHVNAKIRKCWKEGLSKAETEIKCSNWDLFENFRFFFEFKCRHWQFPDDCDDLVVELDTEEGIISNPSLPPNEVCDQNVEILQSATKESIMPDVPEHYLDFEQHLKAKIQQALNKHPGQEKLLKNAIFTTLNGIENRDHKSLEELFSSLSSNH.

The protein belongs to the lin-8 family.

This is an uncharacterized protein from Caenorhabditis elegans.